A 162-amino-acid chain; its full sequence is MIPGEYILSSESLTGNVGREAKTIEIINTGDRPVQIGSHFHFAEVNPSISFDRSEGYGFRLDIPSGTAVRLEPGDARTVNLVAIGGDRIVAGFRDLVDGPLEDLKVNVWEGREDGWRRSSAAGDAPQELPQVEAAERGRKLDDATDVDTNVGTEEGFEEGRN.

Positions 116 to 162 (WRRSSAAGDAPQELPQVEAAERGRKLDDATDVDTNVGTEEGFEEGRN) are disordered. Residues 134-143 (AAERGRKLDD) show a composition bias toward basic and acidic residues.

The protein belongs to the urease beta subunit family. As to quaternary structure, heterotrimer of UreA (gamma), UreB (beta) and UreC (alpha) subunits. Three heterotrimers associate to form the active enzyme.

Its subcellular location is the cytoplasm. The catalysed reaction is urea + 2 H2O + H(+) = hydrogencarbonate + 2 NH4(+). It participates in nitrogen metabolism; urea degradation; CO(2) and NH(3) from urea (urease route): step 1/1. This is Urease subunit beta from Corynebacterium glutamicum (strain ATCC 13032 / DSM 20300 / JCM 1318 / BCRC 11384 / CCUG 27702 / LMG 3730 / NBRC 12168 / NCIMB 10025 / NRRL B-2784 / 534).